Consider the following 718-residue polypeptide: Phenylalanine--tRNA ligase beta subunit (718 aa).

One can recognise a tRNA-binding domain in the interval 40–153; that stretch reads FLNVSKIKFG…KADLKQDPID (114 aa). Residues 387–462 enclose the B5 domain; sequence DKKESFNFVW…RFYGYENLVF (76 aa). Positions 440, 446, 449, and 450 each coordinate Mg(2+).

It belongs to the phenylalanyl-tRNA synthetase beta subunit family. Type 1 subfamily. In terms of assembly, tetramer of two alpha and two beta subunits. The cofactor is Mg(2+).

Its subcellular location is the cytoplasm. It carries out the reaction tRNA(Phe) + L-phenylalanine + ATP = L-phenylalanyl-tRNA(Phe) + AMP + diphosphate + H(+). The chain is Phenylalanine--tRNA ligase beta subunit from Mycoplasmopsis pulmonis (strain UAB CTIP) (Mycoplasma pulmonis).